A 608-amino-acid chain; its full sequence is UvrABC system protein C (608 aa).

Residues Asn-16–Ile-94 enclose the GIY-YIG domain. Residues Asn-204 to Val-239 form the UVR domain.

It belongs to the UvrC family. Interacts with UvrB in an incision complex.

Its subcellular location is the cytoplasm. Functionally, the UvrABC repair system catalyzes the recognition and processing of DNA lesions. UvrC both incises the 5' and 3' sides of the lesion. The N-terminal half is responsible for the 3' incision and the C-terminal half is responsible for the 5' incision. This is UvrABC system protein C from Pseudomonas aeruginosa (strain ATCC 15692 / DSM 22644 / CIP 104116 / JCM 14847 / LMG 12228 / 1C / PRS 101 / PAO1).